Consider the following 808-residue polypeptide: Sucrose synthase 2 (808 aa).

At serine 10 the chain carries Phosphoserine; by CPK. The segment at 272–749 (MMFNVVILSP…GLQRIYEKYT (478 aa)) is GT-B glycosyltransferase.

It belongs to the glycosyltransferase 1 family. Plant sucrose synthase subfamily. In terms of assembly, homotetramer or heterotetramer with SUS1. In terms of processing, phosphorylated at Ser-10 by CPK23 in developing seeds. Predominantly expressed in the leaf tissues. Expressed in seeds, and at lower levels in roots. Expressed in leaf mesophyll and phloem (at protein level).

The enzyme catalyses an NDP-alpha-D-glucose + D-fructose = a ribonucleoside 5'-diphosphate + sucrose + H(+). Its activity is regulated as follows. Activated by phosphorylation at Ser-10 by CPK23. Sucrose-cleaving enzyme that provides UDP-glucose and fructose for various metabolic pathways. Functions in developing seeds by supplying substrates for the biosynthesis of storage products. The chain is Sucrose synthase 2 (SUS2) from Oryza sativa subsp. japonica (Rice).